The primary structure comprises 427 residues: Glucose-6-phosphate isomerase (427 aa).

Glu277 serves as the catalytic Proton donor. Active-site residues include His298 and Lys414.

Belongs to the GPI family.

It is found in the cytoplasm. The enzyme catalyses alpha-D-glucose 6-phosphate = beta-D-fructose 6-phosphate. It participates in carbohydrate biosynthesis; gluconeogenesis. The protein operates within carbohydrate degradation; glycolysis; D-glyceraldehyde 3-phosphate and glycerone phosphate from D-glucose: step 2/4. Its function is as follows. Catalyzes the reversible isomerization of glucose-6-phosphate to fructose-6-phosphate. The protein is Glucose-6-phosphate isomerase of Mycoplasma mycoides subsp. mycoides SC (strain CCUG 32753 / NCTC 10114 / PG1).